We begin with the raw amino-acid sequence, 1332 residues long: DNA-directed RNA polymerase subunit beta' (1332 aa).

Residues Cys60, Cys62, Cys75, and Cys78 each contribute to the Zn(2+) site. The Mg(2+) site is built by Asp535, Asp537, and Asp539. The Zn(2+) site is built by Cys894, Cys977, Cys984, and Cys987.

The protein belongs to the RNA polymerase beta' chain family. As to quaternary structure, the RNAP catalytic core consists of 2 alpha, 1 beta, 1 beta' and 1 omega subunit. When a sigma factor is associated with the core the holoenzyme is formed, which can initiate transcription. It depends on Mg(2+) as a cofactor. Requires Zn(2+) as cofactor.

It carries out the reaction RNA(n) + a ribonucleoside 5'-triphosphate = RNA(n+1) + diphosphate. In terms of biological role, DNA-dependent RNA polymerase catalyzes the transcription of DNA into RNA using the four ribonucleoside triphosphates as substrates. This Corynebacterium kroppenstedtii (strain DSM 44385 / JCM 11950 / CIP 105744 / CCUG 35717) protein is DNA-directed RNA polymerase subunit beta'.